The chain runs to 263 residues: Meiotic drive suppressor wtf6 (263 aa).

Positions Met1–Asp68 are disordered. Basic and acidic residues predominate over residues Lys19–Pro30. 3 consecutive transmembrane segments (helical) span residues Phe73–Cys93, Trp110–Phe130, and Ser201–Val221.

Belongs to the WTF family. Homomer. Interacts with other proteins that exhibit high sequence similarity.

It localises to the spore membrane. It is found in the vacuole membrane. Its function is as follows. Acts as a suppressor component of the dual wtf meiotic drive system, and can suppress but not confer meiotic drive by compatible poisons. Wtf meiotic drive systems promote unequal transmission of alleles from the parental zygote to progeny spores by encoding a poison and an antidote from the same locus; the poison is trans-acting and forms toxic aggregates in all spores within an ascus, wherease the antidote is spore-specific and targets aggregates for degradation by the vacuole. Meiotic drive by wtf systems therefore lead to poisoning of all progeny that do not inherit the dual poison/antidote allele, or express a compatible antidote. In Schizosaccharomyces kambucha (Fission yeast), this protein is Meiotic drive suppressor wtf6.